We begin with the raw amino-acid sequence, 178 residues long: Cytochrome b6-f complex iron-sulfur subunit 2 (178 aa).

The chain crosses the membrane as a helical span at residues L17–P36. A Rieske domain is found at G61–I161. Residues C107, H109, C125, and H128 each contribute to the [2Fe-2S] cluster site. A disulfide bridge connects residues C112 and C127.

Belongs to the Rieske iron-sulfur protein family. The 4 large subunits of the cytochrome b6-f complex are cytochrome b6, subunit IV (17 kDa polypeptide, PetD), cytochrome f and the Rieske protein, while the 4 small subunits are PetG, PetL, PetM and PetN. The complex functions as a dimer. [2Fe-2S] cluster serves as cofactor.

It localises to the cellular thylakoid membrane. The enzyme catalyses 2 oxidized [plastocyanin] + a plastoquinol + 2 H(+)(in) = 2 reduced [plastocyanin] + a plastoquinone + 4 H(+)(out). Its function is as follows. Component of the cytochrome b6-f complex, which mediates electron transfer between photosystem II (PSII) and photosystem I (PSI), cyclic electron flow around PSI, and state transitions. The sequence is that of Cytochrome b6-f complex iron-sulfur subunit 2 from Nostoc sp. (strain PCC 7120 / SAG 25.82 / UTEX 2576).